The following is a 440-amino-acid chain: Adenylosuccinate synthetase (440 aa).

GTP contacts are provided by residues 13-19 and 41-43; these read GDEGKGK and GHT. Aspartate 14 functions as the Proton acceptor in the catalytic mechanism. Mg(2+) is bound by residues aspartate 14 and glycine 41. Residues 14 to 17, 39 to 42, threonine 135, arginine 149, glutamine 230, threonine 245, and arginine 313 contribute to the IMP site; these read DEGK and NAGH. Catalysis depends on histidine 42, which acts as the Proton donor. 309–315 is a binding site for substrate; it reads TVTKRKR. GTP contacts are provided by residues arginine 315, 341 to 343, and 423 to 425; these read KLD and STG.

Belongs to the adenylosuccinate synthetase family. Homodimer. It depends on Mg(2+) as a cofactor.

The protein resides in the cytoplasm. The catalysed reaction is IMP + L-aspartate + GTP = N(6)-(1,2-dicarboxyethyl)-AMP + GDP + phosphate + 2 H(+). Its pathway is purine metabolism; AMP biosynthesis via de novo pathway; AMP from IMP: step 1/2. Plays an important role in the de novo pathway of purine nucleotide biosynthesis. Catalyzes the first committed step in the biosynthesis of AMP from IMP. In Methylobacillus flagellatus (strain ATCC 51484 / DSM 6875 / VKM B-1610 / KT), this protein is Adenylosuccinate synthetase.